The following is a 776-amino-acid chain: Heat shock protein 110 (776 aa).

The tract at residues 741–776 (ILNKKKPAAPAPPKKEEPQPAAGDQPQSQPGEMDVD) is disordered.

Belongs to the heat shock protein 70 family.

In Caenorhabditis elegans, this protein is Heat shock protein 110.